Here is a 342-residue protein sequence, read N- to C-terminus: Dihydroorotate dehydrogenase (quinone) (342 aa).

FMN contacts are provided by residues 61–65 and Thr85; that span reads AGLDK. Position 65 (Lys65) interacts with substrate. 110–114 contributes to the substrate binding site; that stretch reads NRMGF. Residues Asn138 and Asn171 each contribute to the FMN site. Asn171 serves as a coordination point for substrate. Ser174 functions as the Nucleophile in the catalytic mechanism. A substrate-binding site is contributed by Asn176. 2 residues coordinate FMN: Lys216 and Thr244. 245–246 contributes to the substrate binding site; sequence NT. Residues Gly267, Gly296, and 317–318 each bind FMN; that span reads YS.

This sequence belongs to the dihydroorotate dehydrogenase family. Type 2 subfamily. As to quaternary structure, monomer. FMN serves as cofactor.

It localises to the cell membrane. It catalyses the reaction (S)-dihydroorotate + a quinone = orotate + a quinol. The protein operates within pyrimidine metabolism; UMP biosynthesis via de novo pathway; orotate from (S)-dihydroorotate (quinone route): step 1/1. Functionally, catalyzes the conversion of dihydroorotate to orotate with quinone as electron acceptor. In Pseudomonas paraeruginosa (strain DSM 24068 / PA7) (Pseudomonas aeruginosa (strain PA7)), this protein is Dihydroorotate dehydrogenase (quinone).